Here is a 116-residue protein sequence, read N- to C-terminus: Large ribosomal subunit protein bL17 (116 aa).

It belongs to the bacterial ribosomal protein bL17 family. Part of the 50S ribosomal subunit. Contacts protein L32.

In Fusobacterium nucleatum subsp. nucleatum (strain ATCC 25586 / DSM 15643 / BCRC 10681 / CIP 101130 / JCM 8532 / KCTC 2640 / LMG 13131 / VPI 4355), this protein is Large ribosomal subunit protein bL17.